The chain runs to 986 residues: Anoctamin-1 (986 aa).

Residues 1 to 333 (MRVNEKYSTL…FGEKIGLYFA (333 aa)) lie on the Cytoplasmic side of the membrane. The disordered stretch occupies residues 79 to 121 (LVRRVQHSDTPSGARSVKQDHPLPGKGASLDAGSGEPPMDYHE). A phosphoserine mark is found at Ser107 and Ser196. Residues 334–354 (WLGVYTQMLIPASIVGIIVFL) traverse the membrane as a helical segment. The Extracellular segment spans residues 355-406 (YGCATMDENIPSMEMCDQRHNITMCPLCDKTCSYWKMSSACATARASHLFDN). Disulfide bonds link Cys370-Cys395, Cys379-Cys862, Cys382-Cys386, and Cys651-Cys656. The chain crosses the membrane as a helical span at residues 407–427 (PATVFFSVFMALWAATFMEHW). Glu425 serves as a coordination point for Ca(2+). The Cytoplasmic portion of the chain corresponds to 428-519 (KRKQMRLNYR…RDRFPAYLTN (92 aa)). The helical transmembrane segment at 520–540 (LVSIIFMIAVTFAIVLGVIIY) threads the bilayer. The Extracellular portion of the chain corresponds to 541 to 568 (RISMAAALAMNSSPSVRSNIRVTVTATA). Residues 569-589 (VIINLVVIILLDEVYGCIARW) form a helical membrane-spanning segment. Residues 590-607 (LTKIEVPKTEKSFEERLI) lie on the Cytoplasmic side of the membrane. A helical membrane pass occupies residues 608–628 (FKAFLLKFVNSYTPIFYVAFF). Residues 629-657 (KGRFVGRPGDYVYIFRSFRMEECAPGGCL) lie on the Extracellular side of the membrane. The chain crosses the membrane as a helical span at residues 658–678 (MELCIQLSIIMLGKQLIQNNL). Ca(2+) contacts are provided by Asn677, Glu680, Glu728, Glu731, Glu760, and Asp764. Residues 679 to 725 (FEIGIPKMKKLIRYLKLKQQSPPDHEECVKRKQRYEVDYNLEPFAGL) are Cytoplasmic-facing. Transmembrane regions (helical) follow at residues 726–746 (TPEY…VASF) and 747–767 (PLAP…DAKK). At 768 to 784 (FVTELRRPVAVRAKDIG) the chain is on the cytoplasmic side. The helical transmembrane segment at 785–805 (IWYNILRGIGKLAVIINAFVI) threads the bilayer. The Extracellular portion of the chain corresponds to 806 to 892 (SFTSDFIPRL…FWAVLAARLA (87 aa)). N-linked (GlcNAc...) asparagine glycosylation is present at Asn832. A helical transmembrane segment spans residues 893 to 913 (FVIVFQNLVMFMSDFVDWVIP). Residues Asp909 and Asp914 each coordinate Ca(2+). Residues 914–986 (DIPKDISQQI…PSHAYHGGVL (73 aa)) lie on the Cytoplasmic side of the membrane. The span at 951 to 960 (KERQKDEPPC) shows a compositional bias: basic and acidic residues. The interval 951-986 (KERQKDEPPCNHHNTKACPDSLGSPAPSHAYHGGVL) is disordered.

The protein belongs to the anoctamin family. Homodimer. Interacts with CFTR. Interacts with TRPV4. Expressed in nasal epithelial cells (at protein level). In the kidney, expressed in the collecting duct (at protein level). Broadly expressed with higher levels in liver, skeletal muscle and gastrointestinal muscles. Expressed in eccrine sweat glands.

The protein resides in the apical cell membrane. It is found in the presynapse. It carries out the reaction chloride(in) = chloride(out). ATP and calmodulin are essential for its activation. Channel activity is inhibited by CFTR protein and by chloride inhibitors such as niflumic acid (NFA) and 4,4'-diisothiocyanatostilbene-2,2'-disulfonic acid (DIDS). Activated by heat with activation seen at temperatures above 44 degrees Celsius. Activated by BDNF in radial glial cells. Calcium-activated chloride channel (CaCC). Plays a role in transepithelial anion transport and smooth muscle contraction. Required for the normal functioning of the interstitial cells of Cajal (ICCs) which generate electrical pacemaker activity in gastrointestinal smooth muscles. Acts as a major contributor to basal and stimulated chloride conductance in airway epithelial cells and plays an important role in tracheal cartilage development. Required for CFTR activation by enhancing endoplasmic reticulum Ca(2+) store release and is also required for CFTR membrane expression. Required for basal and ATP-dependent mucus secretion in airways and intestine, probably by controlling exocytosis of mucus-filled granules by providing Ca(2+) to an apical signaling compartment. Contributes to airway mucus expression induced by interleukins IL3 and IL8 and by the asthma-associated protein CLCA1 and is required for expression of mucin MUC5AC. However, was shown in another study not to be required for MUC5AC expression. Plays a role in the propagation of Ca(2+) waves in Kolliker's organ in the cochlea and contributes to the refinement of auditory brainstem circuitries prior to hearing onset. In vomeronasal sensory neurons, modulates spontaneous firing patterns in the absence of stimuli as well as the firing pattern of pheromone-evoked activity. Responsible for calcium-activated chloride channel activity in type I taste cells of the vallate papillae. Acts as a heat sensor in nociceptive neurons. In dorsal root ganglion neurons, plays a role in mediating non-histaminergic Mas-related G-protein coupled receptor (MRGPR)-dependent itching, acting as a downstream effector of MRGPRs. In the developing brain, required for the Ca(2+)-dependent process extension of radial glial cells. Functionally, calcium-activated chloride channel (CaCC). Contributes to calcium-activated chloride secretion in human sweat gland epithelial cells. Shows increased basal chloride permeability and decreased Ca(2+)-induced chloride permeability. In terms of biological role, calcium-activated chloride channel (CaCC). Shows increased sensitivity to intracellular Ca(2+). This chain is Anoctamin-1 (ANO1), found in Homo sapiens (Human).